A 328-amino-acid chain; its full sequence is Porphobilinogen deaminase (328 aa).

Cys245 carries the post-translational modification S-(dipyrrolylmethanemethyl)cysteine.

This sequence belongs to the HMBS family. As to quaternary structure, monomer. Dipyrromethane serves as cofactor.

It catalyses the reaction 4 porphobilinogen + H2O = hydroxymethylbilane + 4 NH4(+). The protein operates within porphyrin-containing compound metabolism; protoporphyrin-IX biosynthesis; coproporphyrinogen-III from 5-aminolevulinate: step 2/4. It participates in porphyrin-containing compound metabolism; chlorophyll biosynthesis. Functionally, tetrapolymerization of the monopyrrole PBG into the hydroxymethylbilane pre-uroporphyrinogen in several discrete steps. This Gloeobacter violaceus (strain ATCC 29082 / PCC 7421) protein is Porphobilinogen deaminase.